The chain runs to 391 residues: Phosphoglycerate kinase (391 aa).

Substrate is bound by residues 21 to 23, Arg36, 59 to 62, Arg113, and Arg146; these read DLN and HLGR. ATP contacts are provided by residues Lys197, Glu319, and 345–348; that span reads GGDT.

This sequence belongs to the phosphoglycerate kinase family. In terms of assembly, monomer.

Its subcellular location is the cytoplasm. It catalyses the reaction (2R)-3-phosphoglycerate + ATP = (2R)-3-phospho-glyceroyl phosphate + ADP. It participates in carbohydrate degradation; glycolysis; pyruvate from D-glyceraldehyde 3-phosphate: step 2/5. This Stenotrophomonas maltophilia (strain R551-3) protein is Phosphoglycerate kinase.